Reading from the N-terminus, the 83-residue chain is Gas vesicle protein G (83 aa).

The protein belongs to the gas vesicle GvpG family. GvpF to GvpM interact with each other in vitro, and may form multi-subunit complex(es).

It is found in the gas vesicle. Functionally, proteins GvpF to GvpM might be involved in nucleating gas vesicle formation. A minor component of the gas vesicle. Gas vesicles are hollow, gas filled proteinaceous nanostructures found in some microorganisms. They allow positioning of halobacteria at the optimal depth for growth in the poorly aerated, shallow brine pools of their habitat. In terms of biological role, expression of a 9.5 kb mc-vac DNA fragment containing 2 divergently transcribed regions (gvpD-gvpE-gvpF-gvpG-gvpH-gvpI-gvpJ-gvpK-gvpL-gvpM and gvpA-gvpC-gvpN-gvpO) allows H.volcanii to produce gas vesicles. The protein is Gas vesicle protein G of Haloferax mediterranei (strain ATCC 33500 / DSM 1411 / JCM 8866 / NBRC 14739 / NCIMB 2177 / R-4) (Halobacterium mediterranei).